We begin with the raw amino-acid sequence, 788 residues long: Cap-specific mRNA (nucleoside-2'-O-)-methyltransferase 1 (788 aa).

Positions 25–71 constitute a G-patch domain; it reads YSNKAMEMMKKMGYENDKGLGKSNQGRLEPIIAVQQDGRRGFGLKLD. Substrate-binding positions include 143–147 and R158; that span reads KTVFD. Positions 171-384 constitute a RrmJ-type SAM-dependent 2'-O-MTase domain; the sequence is IFLNRAAVKM…ERYLVCKYKR (214 aa). Position 174 (N174) interacts with S-adenosyl-L-methionine. Residue K179 is part of the active site. 215–221 is an S-adenosyl-L-methionine binding site; the sequence is CAGPGGF. D298 is an active-site residue. Residue 308–310 participates in substrate binding; it reads NIQ. Residue K338 is the Proton acceptor of the active site. Residue N373 participates in substrate binding.

As to quaternary structure, interacts (via C-terminus) with r2d2 (via C-terminus).

It localises to the nucleus. The protein localises to the cytoplasm. It catalyses the reaction a 5'-end (N(7)-methyl 5'-triphosphoguanosine)-ribonucleoside in mRNA + S-adenosyl-L-methionine = a 5'-end (N(7)-methyl 5'-triphosphoguanosine)-(2'-O-methyl-ribonucleoside) in mRNA + S-adenosyl-L-homocysteine + H(+). Functionally, S-adenosyl-L-methionine-dependent methyltransferase that mediates mRNA cap1 2'-O-ribose methylation to the 5'-cap structure of mRNAs. Methylates the ribose of the first nucleotide of a m(7)GpppG-capped mRNA to produce m(7)GpppNmp (cap1). Positively regulates the Ago2-dependent small RNA pathway, with roles in both siRNA biogenesis and RISC assembly. Involved in facilitating conversion of pre-RISC into holo-RISC, possibly by promoting the unwinding of Ago2-bound siRNA duplexes and thus the retention of the guide strand in holo-RISC. This chain is Cap-specific mRNA (nucleoside-2'-O-)-methyltransferase 1, found in Drosophila melanogaster (Fruit fly).